A 434-amino-acid polypeptide reads, in one-letter code: Histidinol dehydrogenase (434 aa).

3 residues coordinate NAD(+): Y130, Q191, and N214. Residues S237, Q259, and H262 each coordinate substrate. Residues Q259 and H262 each coordinate Zn(2+). Residues E328 and H329 each act as proton acceptor in the active site. Residues H329, D362, E416, and H421 each coordinate substrate. D362 contacts Zn(2+). H421 serves as a coordination point for Zn(2+).

This sequence belongs to the histidinol dehydrogenase family. Requires Zn(2+) as cofactor.

It carries out the reaction L-histidinol + 2 NAD(+) + H2O = L-histidine + 2 NADH + 3 H(+). Its pathway is amino-acid biosynthesis; L-histidine biosynthesis; L-histidine from 5-phospho-alpha-D-ribose 1-diphosphate: step 9/9. Functionally, catalyzes the sequential NAD-dependent oxidations of L-histidinol to L-histidinaldehyde and then to L-histidine. In Rhodospirillum rubrum (strain ATCC 11170 / ATH 1.1.1 / DSM 467 / LMG 4362 / NCIMB 8255 / S1), this protein is Histidinol dehydrogenase.